The primary structure comprises 202 residues: MENYINLFIRAVFIENLALSFFLGMCTFLAVSKKVKTAFGLGVAVIVVLGISVPVNNLIYHNILAPGALEWAGFPDADLSFLKFLTFIGVIAAIVQILEMALDKYVPALYNALGIFLPLITVNCAIFGGVAFMVERDYNFGESVVFGIGSGVGWALAIVALAAVREKLKYADVPDGLRGLGITFISVGLIGLGFMSFSGVSL.

The next 6 membrane-spanning stretches (helical) occupy residues 11–31 (AVFI…FLAV), 39–59 (FGLG…NNLI), 81–101 (FLKF…LEMA), 114–134 (GIFL…AFMV), 144–164 (VVFG…LAAV), and 180–200 (LGIT…FSGV).

This sequence belongs to the NqrDE/RnfAE family. As to quaternary structure, composed of six subunits; NqrA, NqrB, NqrC, NqrD, NqrE and NqrF.

The protein localises to the cell inner membrane. The catalysed reaction is a ubiquinone + n Na(+)(in) + NADH + H(+) = a ubiquinol + n Na(+)(out) + NAD(+). Functionally, NQR complex catalyzes the reduction of ubiquinone-1 to ubiquinol by two successive reactions, coupled with the transport of Na(+) ions from the cytoplasm to the periplasm. NqrA to NqrE are probably involved in the second step, the conversion of ubisemiquinone to ubiquinol. The protein is Na(+)-translocating NADH-quinone reductase subunit E of Idiomarina loihiensis (strain ATCC BAA-735 / DSM 15497 / L2-TR).